A 113-amino-acid polypeptide reads, in one-letter code: uncharacterized protein (113 aa).

It localises to the mitochondrion. This is an uncharacterized protein from Paramecium tetraurelia.